Here is a 315-residue protein sequence, read N- to C-terminus: Homoserine O-succinyltransferase (315 aa).

Cysteine 142 (acyl-thioester intermediate) is an active-site residue. Positions 163 and 192 each coordinate substrate. The active-site Proton acceptor is histidine 235. The active site involves glutamate 237. Arginine 249 contacts substrate.

This sequence belongs to the MetA family.

Its subcellular location is the cytoplasm. The enzyme catalyses L-homoserine + succinyl-CoA = O-succinyl-L-homoserine + CoA. It functions in the pathway amino-acid biosynthesis; L-methionine biosynthesis via de novo pathway; O-succinyl-L-homoserine from L-homoserine: step 1/1. Transfers a succinyl group from succinyl-CoA to L-homoserine, forming succinyl-L-homoserine. The polypeptide is Homoserine O-succinyltransferase (Tolumonas auensis (strain DSM 9187 / NBRC 110442 / TA 4)).